A 467-amino-acid chain; its full sequence is Acyl-CoA-binding domain-containing protein 5 (467 aa).

Positions 8–97 (HQTRFEAAVS…MKKIIETMPV (90 aa)) constitute an ACB domain. An acyl-CoA contacts are provided by residues 19 to 28 (IQSLPKNGSF), 39 to 43 (YSFYK), lysine 65, and tyrosine 84. 3 disordered regions span residues 119 to 204 (KHGR…IVLN), 219 to 240 (TPLP…EGEP), and 304 to 376 (ITEN…DRGP). The segment covering 125 to 139 (GVTSELGSVLTSTPN) has biased composition (polar residues). Residues 170-187 (DEEDEEDETEHSEEEEKE) show a composition bias toward acidic residues. Basic and acidic residues-rich tracts occupy residues 312-322 (ELKDGGEDGKQ) and 335-347 (KSEH…ERSL). The span at 352 to 372 (GGEGSRSGQIGSSGDGDGWGS) shows a compositional bias: gly residues. A coiled-coil region spans residues 382–411 (EQIAVVLMRLQEDMQNVLQRLHSLEVQTAS). Residues 439-459 (GTLALAVVWPFVVHWLMHVFL) traverse the membrane as a helical segment.

It belongs to the ATG37 family.

It localises to the peroxisome membrane. In terms of biological role, acyl-CoA binding protein which acts as the peroxisome receptor for pexophagy but is dispensable for aggrephagy and nonselective autophagy. Binds medium- and long-chain acyl-CoA esters. This chain is Acyl-CoA-binding domain-containing protein 5 (acbd5), found in Xenopus laevis (African clawed frog).